Consider the following 202-residue polypeptide: Putative pituitary tumor-transforming gene 3 protein (202 aa).

A D-box motif is present at residues 61 to 64 (RKAL). Residues 67 to 92 (VNRATEKSVKTNGPLKQKQPSFSAKK) are disordered. The SH3-binding motif lies at 163–173 (PPLPLKMPSPP).

Belongs to the securin family.

It is found in the cytoplasm. The protein localises to the nucleus. The protein is Putative pituitary tumor-transforming gene 3 protein (PTTG3) of Pongo pygmaeus (Bornean orangutan).